The chain runs to 302 residues: Nucleoside kinase (302 aa).

Residues D17, Q33, G43, and N47 each contribute to the substrate site. Q109 is a binding site for ATP. Substrate contacts are provided by residues 111–113 (TFF) and Q163. ATP contacts are provided by residues N186 and 214–219 (TKGSKG). D247 is a binding site for substrate. D247 functions as the Proton acceptor in the catalytic mechanism.

In terms of assembly, homodimer. It depends on Mg(2+) as a cofactor. Mn(2+) serves as cofactor.

The catalysed reaction is cytidine + ATP = CMP + ADP + H(+). The enzyme catalyses guanosine + ATP = GMP + ADP + H(+). It carries out the reaction inosine + ATP = IMP + ADP + H(+). In terms of biological role, catalyzes the phosphorylation of a wide range of nucleosides to yield nucleoside monophosphates. Shows the highest activity for inosine, guanosine and cytidine, but very poor kinase activity with adenosine, thymidine, uridine and xanthosine. ATP is the best phosphate donor, but can also use ITP and GTP. Shows extremely low activity with fructose-6-phosphate. The chain is Nucleoside kinase from Methanocaldococcus jannaschii (strain ATCC 43067 / DSM 2661 / JAL-1 / JCM 10045 / NBRC 100440) (Methanococcus jannaschii).